The sequence spans 385 residues: Putative type I restriction enzyme specificity subunit S.HindORF215P (385 aa).

The protein belongs to the type-I restriction system S methylase family.

A putative specificity subunit for a type I restriction enzyme; the corresponding endonuclease and methylase subunits have multiple frameshifts and are probably not expressed. The polypeptide is Putative type I restriction enzyme specificity subunit S.HindORF215P (Haemophilus influenzae (strain ATCC 51907 / DSM 11121 / KW20 / Rd)).